Consider the following 384-residue polypeptide: 8-amino-7-oxononanoate synthase (384 aa).

Residue Arg-21 participates in substrate binding. 108–109 (GF) is a binding site for pyridoxal 5'-phosphate. His-133 contributes to the substrate binding site. Ser-179, His-207, and Thr-233 together coordinate pyridoxal 5'-phosphate. An N6-(pyridoxal phosphate)lysine modification is found at Lys-236. Thr-352 serves as a coordination point for substrate.

This sequence belongs to the class-II pyridoxal-phosphate-dependent aminotransferase family. BioF subfamily. As to quaternary structure, homodimer. Requires pyridoxal 5'-phosphate as cofactor.

The catalysed reaction is 6-carboxyhexanoyl-[ACP] + L-alanine + H(+) = (8S)-8-amino-7-oxononanoate + holo-[ACP] + CO2. Its pathway is cofactor biosynthesis; biotin biosynthesis. In terms of biological role, catalyzes the decarboxylative condensation of pimeloyl-[acyl-carrier protein] and L-alanine to produce 8-amino-7-oxononanoate (AON), [acyl-carrier protein], and carbon dioxide. This chain is 8-amino-7-oxononanoate synthase, found in Enterobacter sp. (strain 638).